We begin with the raw amino-acid sequence, 224 residues long: Holliday junction branch migration complex subunit RuvA (224 aa).

The domain I stretch occupies residues 1–67 (MISWLKGEKV…EDGTSLYGFI (67 aa)). The interval 68 to 146 (EVNQRDLFRE…RFTDNDKTIH (79 aa)) is domain II. The interval 147–155 (ENKKGIEAN) is flexible linker. The domain III stretch occupies residues 156 to 224 (QFSKYIDEIY…ILMKLSEKTT (69 aa)).

It belongs to the RuvA family. Homotetramer. Forms an RuvA(8)-RuvB(12)-Holliday junction (HJ) complex. HJ DNA is sandwiched between 2 RuvA tetramers; dsDNA enters through RuvA and exits via RuvB. An RuvB hexamer assembles on each DNA strand where it exits the tetramer. Each RuvB hexamer is contacted by two RuvA subunits (via domain III) on 2 adjacent RuvB subunits; this complex drives branch migration. In the full resolvosome a probable DNA-RuvA(4)-RuvB(12)-RuvC(2) complex forms which resolves the HJ.

The protein localises to the cytoplasm. In terms of biological role, the RuvA-RuvB-RuvC complex processes Holliday junction (HJ) DNA during genetic recombination and DNA repair, while the RuvA-RuvB complex plays an important role in the rescue of blocked DNA replication forks via replication fork reversal (RFR). RuvA specifically binds to HJ cruciform DNA, conferring on it an open structure. The RuvB hexamer acts as an ATP-dependent pump, pulling dsDNA into and through the RuvAB complex. HJ branch migration allows RuvC to scan DNA until it finds its consensus sequence, where it cleaves and resolves the cruciform DNA. This Prochlorococcus marinus (strain NATL1A) protein is Holliday junction branch migration complex subunit RuvA.